A 64-amino-acid chain; its full sequence is Large ribosomal subunit protein eL37 (64 aa).

Residues Cys20, Cys23, Cys35, and Cys38 each coordinate Zn(2+). Residues 20 to 38 (CRRCGRRAFHVRKKVCAAC) form a C4-type zinc finger.

The protein belongs to the eukaryotic ribosomal protein eL37 family. It depends on Zn(2+) as a cofactor.

Its function is as follows. Binds to the 23S rRNA. The polypeptide is Large ribosomal subunit protein eL37 (Methanococcus maripaludis (strain DSM 14266 / JCM 13030 / NBRC 101832 / S2 / LL)).